Consider the following 284-residue polypeptide: Tropomyosin alpha-1 chain (284 aa).

Methionine 1 carries the post-translational modification N-acetylmethionine. Residues 1–38 (MDAIKKKMQMLKLDKENALDRAEQAEADKKAAEDRSKQ) form a disordered region. Residues 1-284 (MDAIKKKMQM…DHALNDMTSI (284 aa)) are a coiled coil. Residues 12–38 (KLDKENALDRAEQAEADKKAAEDRSKQ) show a composition bias toward basic and acidic residues. 3 positions are modified to phosphoserine: alanine 31, serine 45, and lysine 51. The interval 116-136 (AEKAADESERGMKVIESRAQK) is disordered. Residues serine 174, serine 186, and serine 206 each carry the phosphoserine modification. An N6-acetyllysine modification is found at lysine 213. Serine 252 bears the Phosphoserine mark. Tyrosine 261 carries the post-translational modification Phosphotyrosine. Residue serine 271 is modified to Phosphoserine. Position 283 is a phosphoserine; by DAPK1 (serine 283).

Belongs to the tropomyosin family. Homodimer. Heterodimer of an alpha (TPM1, TPM3 or TPM4) and a beta (TPM2) chain. Interacts with HRG (via the HRR domain); the interaction contributes to the antiangiogenic properties of the histidine/proline-rich region (HRR) of HRG. Interacts (via N-terminus) with LMOD2 (via N-terminus) and TMOD1 (via N-terminus). Phosphorylated at Ser-283 by DAPK1 in response to oxidative stress and this phosphorylation enhances stress fiber formation in endothelial cells. Detected in primary breast cancer tissues but undetectable in normal breast tissues in Sudanese patients. Isoform 1 is expressed in adult and fetal skeletal muscle and cardiac tissues, with higher expression levels in the cardiac tissues. Isoform 10 is expressed in adult and fetal cardiac tissues, but not in skeletal muscle.

It is found in the cytoplasm. It localises to the cytoskeleton. Functionally, binds to actin filaments in muscle and non-muscle cells. Plays a central role, in association with the troponin complex, in the calcium dependent regulation of vertebrate striated muscle contraction. Smooth muscle contraction is regulated by interaction with caldesmon. In non-muscle cells is implicated in stabilizing cytoskeleton actin filaments. This Homo sapiens (Human) protein is Tropomyosin alpha-1 chain (TPM1).